Consider the following 276-residue polypeptide: NAD-capped RNA hydrolase NudC (276 aa).

Residue arginine 82 coordinates substrate. Cysteine 112 and cysteine 115 together coordinate Zn(2+). Residue glutamate 125 coordinates substrate. Positions 130 and 133 each coordinate Zn(2+). Tyrosine 138 is a binding site for substrate. A Nudix hydrolase domain is found at 139–262 (PRISPSMIVL…SIARYLIDLY (124 aa)). Alanine 172, glutamate 188, and glutamate 192 together coordinate a divalent metal cation. Positions 173–194 (GFAEPGESAEDCLVREVREEVA) match the Nudix box motif. A substrate-binding site is contributed by 206–213 (QCWPFPHS). Glutamate 233 lines the a divalent metal cation pocket. Residue alanine 255 coordinates substrate.

The protein belongs to the Nudix hydrolase family. NudC subfamily. In terms of assembly, homodimer. Requires Mg(2+) as cofactor. It depends on Mn(2+) as a cofactor. Zn(2+) serves as cofactor.

The catalysed reaction is a 5'-end NAD(+)-phospho-ribonucleoside in mRNA + H2O = a 5'-end phospho-adenosine-phospho-ribonucleoside in mRNA + beta-nicotinamide D-ribonucleotide + 2 H(+). It catalyses the reaction NAD(+) + H2O = beta-nicotinamide D-ribonucleotide + AMP + 2 H(+). The enzyme catalyses NADH + H2O = reduced beta-nicotinamide D-ribonucleotide + AMP + 2 H(+). In terms of biological role, mRNA decapping enzyme that specifically removes the nicotinamide adenine dinucleotide (NAD) cap from a subset of mRNAs by hydrolyzing the diphosphate linkage to produce nicotinamide mononucleotide (NMN) and 5' monophosphate mRNA. The NAD-cap is present at the 5'-end of some mRNAs and stabilizes RNA against 5'-processing. Has preference for mRNAs with a 5'-end purine. Catalyzes the hydrolysis of a broad range of dinucleotide pyrophosphates. This is NAD-capped RNA hydrolase NudC from Pseudomonas putida (strain ATCC 700007 / DSM 6899 / JCM 31910 / BCRC 17059 / LMG 24140 / F1).